Here is a 269-residue protein sequence, read N- to C-terminus: Tryptophan synthase alpha chain (269 aa).

Active-site proton acceptor residues include E49 and D60.

Belongs to the TrpA family. As to quaternary structure, tetramer of two alpha and two beta chains.

The enzyme catalyses (1S,2R)-1-C-(indol-3-yl)glycerol 3-phosphate + L-serine = D-glyceraldehyde 3-phosphate + L-tryptophan + H2O. The protein operates within amino-acid biosynthesis; L-tryptophan biosynthesis; L-tryptophan from chorismate: step 5/5. Its function is as follows. The alpha subunit is responsible for the aldol cleavage of indoleglycerol phosphate to indole and glyceraldehyde 3-phosphate. This chain is Tryptophan synthase alpha chain, found in Buchnera aphidicola subsp. Acyrthosiphon pisum (strain APS) (Acyrthosiphon pisum symbiotic bacterium).